The following is a 124-amino-acid chain: UPF0538 protein (124 aa).

The protein belongs to the UPF0538 family.

The protein is UPF0538 protein of Dictyostelium discoideum (Social amoeba).